Reading from the N-terminus, the 848-residue chain is MSLHRTLRRFLRKWKALVYAVSFILLIQAFFTFQSSPNLMEEEHLRRLKELQIKKHQELANSMLQGERALVHGRDKLVLNPRDPGFREEFFKHSNNEINILEDHNIGQVDKMEKPVLKPNENKFEEIHFATEKVPEIIVKYQPKCDITIKDSISALSRATTDRCKQQIADAACKMQDGTLFPKSMPRTCKHESKFTFDAPMPTSFDPDIRPVRICYMLVVHGRAIRQLRRLLKVIYHRDHYYYIHVDKRSDYLLREVLKETEQYPNIKVAPWRMATIWGGSSLLQTLLRAISDVLRIWKDWDFFINLSALDFPIEKDEKLVQYLSKYRDKNFMKSHGREDEKFIRKQGLNRVFVECDQHMWRLGERQLPEGITVNGGSDWVALNRRLCDFAVNGNDQLLTQLKHWYEYTLLPAESFFHTLVQNSDLCETFVDNNIRVTNWNRARGCKCQYKHIVDWCGCSPNDFYPSDLVRLRTSRPVFFARKFEESINQEVVNHLDFKLYGDYPPGTPALHSLWENALRVNSKMPSDCNLSVVSMLQVEMHKKDEEFVGYVVTFDAGWVGRRGAGDDPATSEDGSRVQLQAFLSPQPSLRILDRSSNLAKRLETASVGTNWDVKELVIRDWGGLVGPNSDVHLVARWSRSEDDFVVTVVVIDPLNVVADYNDFRTPSKAAGVTETPLSLKKPLRPGRWLVRFYVQRQFTNICAELDFYVTPQEFKGGIEGDSVLREINRGVVDDAQVNAANRNLYSIRTTLNLARNNQAETELASESNHVAGLKLRNWVDFVVSSGWKAKDACLVAQSPETWREAQPRRCFMPRQGTPNLCENTNWSSLSPDPKTELISVKPDGRIR.

Over 1–14 (MSLHRTLRRFLRKW) the chain is Cytoplasmic. The helical; Signal-anchor for type II membrane protein transmembrane segment at 15–35 (KALVYAVSFILLIQAFFTFQS) threads the bilayer. Over 36–843 (SPNLMEEEHL…PKTELISVKP (808 aa)) the chain is Lumenal. Intrachain disulfides connect C145–C173, C189–C427, C446–C459, and C448–C457. Residues V219, D247, and 276–278 (TIW) each bind UDP-alpha-D-xylose. N-linked (GlcNAc...) asparagine glycosylation is present at N306. Position 379 to 380 (379 to 380 (DW)) interacts with UDP-alpha-D-xylose. UDP-alpha-D-xylose is bound by residues S460 and 482–483 (RK). 2 disulfides stabilise this stretch: C529-C811 and C794-C822. N530 is a glycosylation site (N-linked (GlcNAc...) asparagine). The tract at residues 824 to 848 (NTNWSSLSPDPKTELISVKPDGRIR) is disordered. A glycan (N-linked (GlcNAc...) asparagine) is linked at N826.

The protein belongs to the glycosyltransferase 14 family. XylT subfamily. A divalent metal cation serves as cofactor.

Its subcellular location is the endoplasmic reticulum membrane. It localises to the golgi apparatus membrane. The enzyme catalyses UDP-alpha-D-xylose + L-seryl-[protein] = 3-O-(beta-D-xylosyl)-L-seryl-[protein] + UDP + H(+). The protein operates within glycan metabolism; chondroitin sulfate biosynthesis. It functions in the pathway glycan metabolism; heparan sulfate biosynthesis. Catalyzes the first step in biosynthesis of glycosaminoglycan. Transfers D-xylose from UDP-D-xylose to specific serine residues of the core protein. Initial enzyme in the biosynthesis of chondroitin sulfate and dermatan sulfate proteoglycans in fibroblasts and chondrocytes. The chain is Xylosyltransferase (xt) from Ciona intestinalis (Transparent sea squirt).